A 160-amino-acid polypeptide reads, in one-letter code: METQRASLSLGRCSLWLLLLGLALPSASAQVLSYREAVLRAADQLNEKSSEANLYRLLELDPPPKQDDENSNIPKPVSFRVKETVCPRTSQQPAEQCDFKENGLLKECVGTVTLDQVRNNFDITCAEPQSVRGLRRLGRKIAHGVKKYGPTVLRIIRIAG.

Residues 1 to 29 form the signal peptide; it reads METQRASLSLGRCSLWLLLLGLALPSASA. The propeptide occupies 30-131; that stretch reads QVLSYREAVL…DITCAEPQSV (102 aa). 2 cysteine pairs are disulfide-bonded: C86–C97 and C108–C125.

Belongs to the cathelicidin family.

The protein localises to the secreted. Its function is as follows. Broad spectrum bactericidal agent. The sequence is that of Cathelin-related peptide SC5 from Ovis aries (Sheep).